Reading from the N-terminus, the 387-residue chain is D(4) dopamine receptor (387 aa).

Over 1–34 (MGNSSATEDGGLLAGRGPESLGTGAGLGGAGAAA) the chain is Extracellular. N-linked (GlcNAc...) asparagine glycosylation occurs at Asn-3. A helical membrane pass occupies residues 35–57 (LVGGVLLIGLVLAGNSLVCVSVA). At 58–67 (SERTLQTPTN) the chain is on the cytoplasmic side. Residues 68–90 (YFIVSLAAADLLLAVLVLPLFVY) traverse the membrane as a helical segment. A Na(+)-binding site is contributed by Asp-77. The Extracellular portion of the chain corresponds to 91–106 (SEVQGGVWLLSPRLCD). Residues Cys-105 and Cys-180 are joined by a disulfide bond. A helical transmembrane segment spans residues 107-128 (TLMAMDVMLCTASIFNLCAISV). Residue Ser-119 participates in Na(+) binding. Residues 129-146 (DRFVAVTVPLRYNQQGQC) are Cytoplasmic-facing. The helical transmembrane segment at 147–170 (QLLLIAATWLLSAAVASPVVCGLN) threads the bilayer. The Extracellular portion of the chain corresponds to 171 to 186 (DVPGRDPAVCCLENRD). Residues 187-208 (YVVYSSVCSFFLPCPLMLLLYW) traverse the membrane as a helical segment. Over 209–314 (ATFRGLRRWE…ITGRERKAMR (106 aa)) the chain is Cytoplasmic. 2 disordered regions span residues 224-247 (KLHS…TQGP) and 287-306 (AALP…AKIT). A helical transmembrane segment spans residues 315 to 337 (VLPVVVGAFLVCWTPFFVVHITR). Residues 338–346 (ALCPACFVS) are Extracellular-facing. A disulfide bridge connects residues Cys-340 and Cys-343. Residues 347 to 369 (PRLVSAVTWLGYVNSALNPIIYT) traverse the membrane as a helical segment. At 370–387 (IFNAEFRSVFRKTLRLRC) the chain is on the cytoplasmic side. Residue Cys-387 is the site of S-palmitoyl cysteine attachment.

This sequence belongs to the G-protein coupled receptor 1 family. In terms of assembly, forms homo- and heterooligomers with DRD2. D4.7 allele exhibits higher affinity for homodimers compared to DRD2 heterodimers, while alleles D42. and 4.4 have similar affinities for both. The interaction with DRD2 may modulate agonist-induced downstream signaling. Interacts with CLIC6. Interacts with GPRASP1. May interact with ADORA2A. Interacts with KLHL12. Palmitoylated. Palmitoylation of the C-terminal Cys is important for normal expression at the cell membrane. In terms of tissue distribution, detected in olfactory bulb, hypothalamus, olfactory tubercle, brainstem and striatum.

The protein localises to the cell membrane. Its function is as follows. Dopamine receptor responsible for neuronal signaling in the mesolimbic system of the brain, an area of the brain that regulates emotion and complex behavior. Activated by dopamine, but also by epinephrine and norepinephrine, and by numerous synthetic agonists and drugs. Agonist binding triggers signaling via G proteins that inhibit adenylyl cyclase. Modulates the circadian rhythm of contrast sensitivity by regulating the rhythmic expression of NPAS2 in the retinal ganglion cells. The protein is D(4) dopamine receptor (Drd4) of Mus musculus (Mouse).